A 451-amino-acid chain; its full sequence is Phosphoglucosamine mutase (451 aa).

The active-site Phosphoserine intermediate is the S102. Residues S102, D242, D244, and D246 each coordinate Mg(2+). Residue S102 is modified to Phosphoserine.

It belongs to the phosphohexose mutase family. Mg(2+) is required as a cofactor. Post-translationally, activated by phosphorylation.

It catalyses the reaction alpha-D-glucosamine 1-phosphate = D-glucosamine 6-phosphate. Its function is as follows. Catalyzes the conversion of glucosamine-6-phosphate to glucosamine-1-phosphate. This chain is Phosphoglucosamine mutase, found in Staphylococcus carnosus (strain TM300).